The primary structure comprises 929 residues: MYVKKRDGRQERVQFDKITARVSRLCYGLDMNHVDPVAITQKVISGVYGGVTTAQLDDLAAETAAYMTVTHPDYAILAARIAVSNLHKQTKKQWSLVISELYNYVNPRTGKHSPMIAKDVYECVMRHKDEFDSAIVYDRDFNYQYFGFKTLERSYLLKLDGQIAERPQHMIMRVAVGIWGDDVERVIETYNLMSLKTFTHASPTLFNAGTPQPQLSSCFLVDMKEDSIEGIYDTLKTCAMISKMAGGIGLNIHRIRATGSYIAGTNGTSNGIVPMLRVFNNTARYVDQGGNKRPGAFAIYLEPWHADVFEFLDLRKNHGKEEVRARDLFLALWIPDLFMKRVEQNGQWTLMCPHECPGLADVYGDEFEALYEKYEKEGKGRKTVKAQKLWYAILEAQTETGNPFMLYKDACNRKSNQKNLGTIRSSNLCTEIIEYSAPDEVAVCNLASLALSAFIDYENASYDFKKLHEVTQVVVRNLNKIIDINHYPVKEAHNSNMRHRPIGVGVQGLADAFLALRMPFDSDAASKLNIQIFETIYHAALTASCQLAKEQGPYATYEGSPVSQGILQYDMWNVTPTNLWDWTALKADIKKYGVRNSLLLAPMPTASTSQILGNNECFEPYTSNIYQRRVLAGEFQVVNPWLLRDLVEMGLWSDAMKNRIIAEGGSIQNIQSIPNDIKALYKTVWEISQRTIVKMAADRGAFIDQSQSLNIHMREPTMGKITSMHFAGWKMGLKTGMYYLRTQAAAQPIQFTVDQEALRATDDRVAPAHSGLKKRSPPAGTYTSIVLRENTSGPRPYAQTGVSGTSTPIGTRDVPTPASTPPPTEVPETLVQSDNRPRPLVSPAKSAGFKADLPEPESPKALATDPIVKTEDIGSPLLERKEGQNEDVDEDSQERDENIYSNAPLSEQQVAACAWNPGADPSSCEMCSG.

One can recognise an ATP-cone domain in the interval 1–92 (MYVKKRDGRQ…VSNLHKQTKK (92 aa)). Residues 5 to 6 (KR), 11 to 17 (ERVQFDK), Thr53, and Asp57 contribute to the ATP site. Positions 202 and 217 each coordinate GDP. Residues Cys218 and Cys444 are joined by a disulfide bond. DTTP contacts are provided by residues 226–228 (DSI), Lys243, Arg256, and 263–264 (AG). Asn427 lines the GDP pocket. Residue Asn427 is the Proton acceptor of the active site. The active-site Cysteine radical intermediate is the Cys429. GDP contacts are provided by residues Glu431 and 605-608 (TAST). Glu431 (proton acceptor) is an active-site residue. Residues 789-904 (ENTSGPRPYA…RDENIYSNAP (116 aa)) are disordered. The segment covering 800–809 (TGVSGTSTPI) has biased composition (polar residues). Residues 868–884 (VKTEDIGSPLLERKEGQ) are compositionally biased toward basic and acidic residues. Positions 885-894 (NEDVDEDSQE) are enriched in acidic residues.

This sequence belongs to the ribonucleoside diphosphate reductase large chain family.

The enzyme catalyses a 2'-deoxyribonucleoside 5'-diphosphate + [thioredoxin]-disulfide + H2O = a ribonucleoside 5'-diphosphate + [thioredoxin]-dithiol. Its activity is regulated as follows. Under complex allosteric control mediated by deoxynucleoside triphosphates and ATP binding to separate specificity and activation sites on the large subunit. The type of nucleotide bound at the specificity site determines substrate preference. It seems probable that ATP makes the enzyme reduce CDP and UDP, dGTP favors ADP reduction and dTTP favors GDP reduction. Stimulated by ATP and inhibited by dATP binding to the activity site. Provides the precursors necessary for DNA synthesis. Catalyzes the biosynthesis of deoxyribonucleotides from the corresponding ribonucleotides. The sequence is that of Ribonucleoside-diphosphate reductase large chain (rnr-1) from Neurospora crassa (strain ATCC 24698 / 74-OR23-1A / CBS 708.71 / DSM 1257 / FGSC 987).